The chain runs to 216 residues: MKLAASLNRLSPKRLFRTKSKASVSRSEPSSFSSNASSSSSDGSYGNLKQGPTATPISVLPQNSGDFYTELVQAFKLIDRDDDGVVSRGDLAALISRLSHEPPSQEEVSLMLREVDGGDGGCISLEDLASRVAGTSGEGSVETEELREVFEIFDVDRNGKISAEELHRVFGVIGDERCTLEECMRMIATVDGNGDGFVCFDDFCRMMVPAMNDHHH.

Positions 18-58 are disordered; that stretch reads TKSKASVSRSEPSSFSSNASSSSSDGSYGNLKQGPTATPIS. A compositionally biased stretch (low complexity) spans 23–44; it reads SVSRSEPSSFSSNASSSSSDGS. 4 EF-hand domains span residues 66–101, 103–138, 141–176, and 178–213; these read DFYTELVQAFKLIDRDDDGVVSRGDLAALISRLSHE, PSQEEVSLMLREVDGGDGGCISLEDLASRVAGTSGE, VETEELREVFEIFDVDRNGKISAEELHRVFGVIGDE, and CTLEECMRMIATVDGNGDGFVCFDDFCRMMVPAMND. Ca(2+) is bound by residues D79, D81, D83, and D90. Positions 154, 156, 158, 160, 165, 191, 193, 195, and 202 each coordinate Ca(2+).

Functionally, potential calcium sensor. This is Probable calcium-binding protein CML35 (CML35) from Arabidopsis thaliana (Mouse-ear cress).